The sequence spans 461 residues: Argininosuccinate lyase (461 aa).

The protein belongs to the lyase 1 family. Argininosuccinate lyase subfamily.

The protein localises to the cytoplasm. The enzyme catalyses 2-(N(omega)-L-arginino)succinate = fumarate + L-arginine. Its pathway is amino-acid biosynthesis; L-arginine biosynthesis; L-arginine from L-ornithine and carbamoyl phosphate: step 3/3. The polypeptide is Argininosuccinate lyase (Limosilactobacillus reuteri subsp. reuteri (strain JCM 1112) (Lactobacillus reuteri)).